The sequence spans 60 residues: Cytotoxin 6 (60 aa).

4 cysteine pairs are disulfide-bonded: C3–C21, C14–C38, C42–C53, and C54–C59.

It belongs to the three-finger toxin family. Short-chain subfamily. Type IA cytotoxin sub-subfamily. As to quaternary structure, monomer in solution; Homodimer and oligomer in the presence of negatively charged lipids forming a pore with a size ranging between 20 and 30 Angstroms. As to expression, expressed by the venom gland.

It is found in the secreted. Its subcellular location is the target cell membrane. In terms of biological role, shows cytolytic activity on many different cells by forming pore in lipid membranes. In vivo, increases heart rate or kills the animal by cardiac arrest. In addition, it binds to heparin with high affinity, interacts with Kv channel-interacting protein 1 (KCNIP1) in a calcium-independent manner, and binds to integrin alpha-V/beta-3 (ITGAV/ITGB3) with moderate affinity. This chain is Cytotoxin 6, found in Naja annulifera (Banded Egyptian cobra).